Consider the following 182-residue polypeptide: Glycerol-3-phosphate acyltransferase 1 (182 aa).

5 helical membrane passes run 5-25, 54-74, 81-101, 117-137, and 157-177; these read MQFL…AYIV, GYFI…VAVA, PTFV…PVLF, IAFD…FYLI, and ILYS…VLIL.

The protein belongs to the PlsY family. In terms of assembly, probably interacts with PlsX.

The protein localises to the cell membrane. It catalyses the reaction an acyl phosphate + sn-glycerol 3-phosphate = a 1-acyl-sn-glycero-3-phosphate + phosphate. It functions in the pathway lipid metabolism; phospholipid metabolism. Catalyzes the transfer of an acyl group from acyl-phosphate (acyl-PO(4)) to glycerol-3-phosphate (G3P) to form lysophosphatidic acid (LPA). This enzyme utilizes acyl-phosphate as fatty acyl donor, but not acyl-CoA or acyl-ACP. The sequence is that of Glycerol-3-phosphate acyltransferase 1 from Bacillus cereus (strain ATCC 14579 / DSM 31 / CCUG 7414 / JCM 2152 / NBRC 15305 / NCIMB 9373 / NCTC 2599 / NRRL B-3711).